Reading from the N-terminus, the 305-residue chain is Ribosomal RNA small subunit methyltransferase H (305 aa).

Residues 33 to 35 (GGH), aspartate 52, aspartate 97, and glutamine 104 contribute to the S-adenosyl-L-methionine site.

This sequence belongs to the methyltransferase superfamily. RsmH family.

Its subcellular location is the cytoplasm. The catalysed reaction is cytidine(1402) in 16S rRNA + S-adenosyl-L-methionine = N(4)-methylcytidine(1402) in 16S rRNA + S-adenosyl-L-homocysteine + H(+). Specifically methylates the N4 position of cytidine in position 1402 (C1402) of 16S rRNA. This Campylobacter lari (strain RM2100 / D67 / ATCC BAA-1060) protein is Ribosomal RNA small subunit methyltransferase H.